The primary structure comprises 337 residues: Ketol-acid reductoisomerase (NADP(+)) (337 aa).

Residues 2–182 (AKIFYDNDAD…GATRAGVLLT (181 aa)) form the KARI N-terminal Rossmann domain. NADP(+) contacts are provided by residues 25–28 (YGSQ), serine 51, serine 53, and 83–86 (DTSQ). Histidine 108 is an active-site residue. Position 134 (glycine 134) interacts with NADP(+). One can recognise a KARI C-terminal knotted domain in the interval 183–328 (TFAEETETDL…ANLRKMMPFI (146 aa)). The Mg(2+) site is built by aspartate 191, glutamate 195, glutamate 227, and glutamate 231. Residue serine 252 participates in substrate binding.

It belongs to the ketol-acid reductoisomerase family. Requires Mg(2+) as cofactor.

It carries out the reaction (2R)-2,3-dihydroxy-3-methylbutanoate + NADP(+) = (2S)-2-acetolactate + NADPH + H(+). The catalysed reaction is (2R,3R)-2,3-dihydroxy-3-methylpentanoate + NADP(+) = (S)-2-ethyl-2-hydroxy-3-oxobutanoate + NADPH + H(+). Its pathway is amino-acid biosynthesis; L-isoleucine biosynthesis; L-isoleucine from 2-oxobutanoate: step 2/4. The protein operates within amino-acid biosynthesis; L-valine biosynthesis; L-valine from pyruvate: step 2/4. Its function is as follows. Involved in the biosynthesis of branched-chain amino acids (BCAA). Catalyzes an alkyl-migration followed by a ketol-acid reduction of (S)-2-acetolactate (S2AL) to yield (R)-2,3-dihydroxy-isovalerate. In the isomerase reaction, S2AL is rearranged via a Mg-dependent methyl migration to produce 3-hydroxy-3-methyl-2-ketobutyrate (HMKB). In the reductase reaction, this 2-ketoacid undergoes a metal-dependent reduction by NADPH to yield (R)-2,3-dihydroxy-isovalerate. The chain is Ketol-acid reductoisomerase (NADP(+)) from Sorangium cellulosum (strain So ce56) (Polyangium cellulosum (strain So ce56)).